Here is a 380-residue protein sequence, read N- to C-terminus: F-box protein At4g18380 (380 aa).

Positions 22–70 constitute an F-box domain; the sequence is IDHFDNLPDSILLLIFNNIGDVKALGRCSVVSKRFHSLIPQVENVFVRV.

The sequence is that of F-box protein At4g18380 from Arabidopsis thaliana (Mouse-ear cress).